The primary structure comprises 186 residues: Glutathione S-transferase 1, isoform A (186 aa).

Positions M1–D81 constitute a GST N-terminal domain. Glutathione is bound by residues S9, H50–I52, and E65–R67. A GST C-terminal domain is found at D92 to I186.

The protein belongs to the GST superfamily. Theta family. Homodimer.

It carries out the reaction RX + glutathione = an S-substituted glutathione + a halide anion + H(+). Functionally, conjugation of reduced glutathione to a wide number of exogenous and endogenous hydrophobic electrophiles. The chain is Glutathione S-transferase 1, isoform A from Anopheles gambiae (African malaria mosquito).